Consider the following 347-residue polypeptide: DNA-directed RNA polymerase subunit alpha (347 aa).

The tract at residues 1–243 (MLIKQGDRLI…DQISVFINFD (243 aa)) is alpha N-terminal domain (alpha-NTD). The interval 260–347 (VNENLFKGID…EWKRKQQNEA (88 aa)) is alpha C-terminal domain (alpha-CTD).

This sequence belongs to the RNA polymerase alpha chain family. Homodimer. The RNAP catalytic core consists of 2 alpha, 1 beta, 1 beta' and 1 omega subunit. When a sigma factor is associated with the core the holoenzyme is formed, which can initiate transcription.

It carries out the reaction RNA(n) + a ribonucleoside 5'-triphosphate = RNA(n+1) + diphosphate. In terms of biological role, DNA-dependent RNA polymerase catalyzes the transcription of DNA into RNA using the four ribonucleoside triphosphates as substrates. The protein is DNA-directed RNA polymerase subunit alpha of Nitratidesulfovibrio vulgaris (strain DSM 19637 / Miyazaki F) (Desulfovibrio vulgaris).